Here is a 97-residue protein sequence, read N- to C-terminus: Large ribosomal subunit protein uL23 (97 aa).

Belongs to the universal ribosomal protein uL23 family. As to quaternary structure, part of the 50S ribosomal subunit. Contacts protein L29, and trigger factor when it is bound to the ribosome.

Its function is as follows. One of the early assembly proteins it binds 23S rRNA. One of the proteins that surrounds the polypeptide exit tunnel on the outside of the ribosome. Forms the main docking site for trigger factor binding to the ribosome. The polypeptide is Large ribosomal subunit protein uL23 (Brucella abortus (strain S19)).